Reading from the N-terminus, the 125-residue chain is Large ribosomal subunit protein eL31 (125 aa).

The protein belongs to the eukaryotic ribosomal protein eL31 family. Component of the large ribosomal subunit.

The protein localises to the cytoplasm. Functionally, component of the large ribosomal subunit. The ribosome is a large ribonucleoprotein complex responsible for the synthesis of proteins in the cell. The sequence is that of Large ribosomal subunit protein eL31 (rpl31) from Xenopus laevis (African clawed frog).